A 254-amino-acid polypeptide reads, in one-letter code: 4-hydroxy-tetrahydrodipicolinate reductase (254 aa).

7 to 12 (GASGRI) provides a ligand contact to NAD(+). Arg35 contributes to the NADP(+) binding site. NAD(+) is bound by residues 91–93 (GTT) and 115–118 (AHNM). The Proton donor/acceptor role is filled by His147. Position 148 (His148) interacts with (S)-2,3,4,5-tetrahydrodipicolinate. Residue Lys151 is the Proton donor of the active site. 157 to 158 (GT) lines the (S)-2,3,4,5-tetrahydrodipicolinate pocket.

This sequence belongs to the DapB family.

It localises to the cytoplasm. The catalysed reaction is (S)-2,3,4,5-tetrahydrodipicolinate + NAD(+) + H2O = (2S,4S)-4-hydroxy-2,3,4,5-tetrahydrodipicolinate + NADH + H(+). It catalyses the reaction (S)-2,3,4,5-tetrahydrodipicolinate + NADP(+) + H2O = (2S,4S)-4-hydroxy-2,3,4,5-tetrahydrodipicolinate + NADPH + H(+). Its pathway is amino-acid biosynthesis; L-lysine biosynthesis via DAP pathway; (S)-tetrahydrodipicolinate from L-aspartate: step 4/4. In terms of biological role, catalyzes the conversion of 4-hydroxy-tetrahydrodipicolinate (HTPA) to tetrahydrodipicolinate. The sequence is that of 4-hydroxy-tetrahydrodipicolinate reductase from Helicobacter pylori (strain G27).